A 360-amino-acid polypeptide reads, in one-letter code: Spore germination protein GerQB (360 aa).

A run of 10 helical transmembrane segments spans residues Ser-11–Phe-31, Ile-45–Leu-65, Ile-84–Leu-104, Phe-116–Val-136, Val-142–Phe-162, Met-188–Ile-208, Tyr-220–Phe-240, Ile-270–Val-290, Ile-300–Leu-320, and Thr-331–Ile-351.

It belongs to the amino acid-polyamine-organocation (APC) superfamily. Spore germination protein (SGP) (TC 2.A.3.9) family.

The protein localises to the membrane. In terms of biological role, required for the germination response to inosine. Has no role in L-alanine germination. The chain is Spore germination protein GerQB (gerQB) from Bacillus cereus.